A 435-amino-acid polypeptide reads, in one-letter code: 5-methylthioadenosine/S-adenosylhomocysteine deaminase (435 aa).

The Zn(2+) site is built by His65 and His67. Substrate is bound by residues Glu94, Arg150, and His189. His216 lines the Zn(2+) pocket. 2 residues coordinate substrate: Glu219 and Asp304. Asp304 contributes to the Zn(2+) binding site.

The protein belongs to the metallo-dependent hydrolases superfamily. MTA/SAH deaminase family. Zn(2+) is required as a cofactor.

It catalyses the reaction S-adenosyl-L-homocysteine + H2O + H(+) = S-inosyl-L-homocysteine + NH4(+). The catalysed reaction is S-methyl-5'-thioadenosine + H2O + H(+) = S-methyl-5'-thioinosine + NH4(+). In terms of biological role, catalyzes the deamination of 5-methylthioadenosine and S-adenosyl-L-homocysteine into 5-methylthioinosine and S-inosyl-L-homocysteine, respectively. Is also able to deaminate adenosine. In Bacillus cereus (strain G9842), this protein is 5-methylthioadenosine/S-adenosylhomocysteine deaminase.